A 102-amino-acid chain; its full sequence is Defensin (102 aa).

A signal peptide spans 1 to 25 (MKCATIVCTIAVVLAATLLNGSVQA). Residues 26 to 62 (APQEEAALSGGANLNTLLDELPEETHHAALENYRAKR) constitute a propeptide that is removed on maturation. 3 disulfide bridges follow: cysteine 65–cysteine 92, cysteine 78–cysteine 98, and cysteine 82–cysteine 100.

It belongs to the invertebrate defensin family. Type 1 subfamily.

The protein localises to the secreted. In terms of biological role, responsible for the anti Gram-positive activity of immune hemolymph. In Anopheles gambiae (African malaria mosquito), this protein is Defensin (Def1).